Consider the following 94-residue polypeptide: MICOS complex subunit MIC12 (94 aa).

A helical transmembrane segment spans residues 7 to 23 (YGSFSVVASVLGASYYY).

The protein belongs to the MICOS complex subunit Mic12 family. Component of the mitochondrial contact site and cristae organizing system (MICOS) complex.

It is found in the mitochondrion inner membrane. In terms of biological role, component of the MICOS complex, a large protein complex of the mitochondrial inner membrane that plays crucial roles in the maintenance of crista junctions, inner membrane architecture, and formation of contact sites to the outer membrane. This Eremothecium gossypii (strain ATCC 10895 / CBS 109.51 / FGSC 9923 / NRRL Y-1056) (Yeast) protein is MICOS complex subunit MIC12 (AIM5).